We begin with the raw amino-acid sequence, 552 residues long: Arginine--tRNA ligase (552 aa).

The 'HIGH' region signature appears at 129 to 139; the sequence is ANPTGPVTLAS.

This sequence belongs to the class-I aminoacyl-tRNA synthetase family. Monomer.

Its subcellular location is the cytoplasm. It carries out the reaction tRNA(Arg) + L-arginine + ATP = L-arginyl-tRNA(Arg) + AMP + diphosphate. The sequence is that of Arginine--tRNA ligase from Frankia alni (strain DSM 45986 / CECT 9034 / ACN14a).